The sequence spans 690 residues: UvrABC system protein C (690 aa).

A GIY-YIG domain is found at 15 to 94 (TDPGVYTFRD…IKRFNPRFNV (80 aa)). The region spanning 207–242 (EPVLRRVRKEMEQASENLDFERAASLRDQLQAMQKS) is the UVR domain.

It belongs to the UvrC family. As to quaternary structure, interacts with UvrB in an incision complex.

It localises to the cytoplasm. Functionally, the UvrABC repair system catalyzes the recognition and processing of DNA lesions. UvrC both incises the 5' and 3' sides of the lesion. The N-terminal half is responsible for the 3' incision and the C-terminal half is responsible for the 5' incision. This is UvrABC system protein C from Corynebacterium jeikeium (strain K411).